The sequence spans 1009 residues: Rho-type GTPase-activating protein 2 (1009 aa).

LIM zinc-binding domains lie at 11–68 (SLCV…DCSD) and 69–129 (KCTN…LLRK). Residues 143 to 155 (KEDFPIKLPERSV) are compositionally biased toward basic and acidic residues. 5 disordered regions span residues 143–228 (KEDF…RTVS), 358–433 (TKEN…LSRS), 449–608 (TSEM…DATD), 664–709 (TREK…ASPK), and 723–780 (QVGD…DYTP). Over residues 162–196 (TRINGKSDVSTNNTAISKNLVSSNEDQQLTPQVLV) the composition is skewed to polar residues. Over residues 212-222 (DNSKDREETSS) the composition is skewed to basic and acidic residues. Polar residues-rich tracts occupy residues 363–385 (KSSQGIQTSTSKSMNHVSPITRT) and 399–414 (LRLSDNGSFSRPQTAD). Positions 481 to 491 (NIRKSKAKKNP) are enriched in basic residues. Composition is skewed to polar residues over residues 493–510 (SRGQSDSTIYNTLPQHGN) and 522–553 (QSSLGSISKKQNSNDTATNRRINGSFTSSSSG). The segment covering 664–682 (TREKDKQSASSRESLEQKE) has biased composition (basic and acidic residues). Composition is skewed to polar residues over residues 683 to 707 (NIATSITVKSPSSNSDRKGSISNAS) and 728 to 749 (ESQQRSPNSSSGGTTNIAQKEI). A Phosphoserine modification is found at Ser763. In terms of domain architecture, Rho-GAP spans 788 to 1006 (SSLQARCAYE…FILGNYRDIF (219 aa)).

Its function is as follows. GTPase-activating protein (GAP) for CDC42 and/or RHO1. This chain is Rho-type GTPase-activating protein 2 (RGA2), found in Saccharomyces cerevisiae (strain ATCC 204508 / S288c) (Baker's yeast).